The chain runs to 332 residues: Ribosomal RNA small subunit methyltransferase H (332 aa).

S-adenosyl-L-methionine contacts are provided by residues 39–41 (GGY), Asp56, Phe83, Asp100, and Gln107.

It belongs to the methyltransferase superfamily. RsmH family.

The protein localises to the cytoplasm. It catalyses the reaction cytidine(1402) in 16S rRNA + S-adenosyl-L-methionine = N(4)-methylcytidine(1402) in 16S rRNA + S-adenosyl-L-homocysteine + H(+). In terms of biological role, specifically methylates the N4 position of cytidine in position 1402 (C1402) of 16S rRNA. The polypeptide is Ribosomal RNA small subunit methyltransferase H (Bartonella tribocorum (strain CIP 105476 / IBS 506)).